The sequence spans 417 residues: NADH-quinone oxidoreductase subunit D (417 aa).

The protein belongs to the complex I 49 kDa subunit family. As to quaternary structure, NDH-1 is composed of 14 different subunits. Subunits NuoB, C, D, E, F, and G constitute the peripheral sector of the complex.

The protein localises to the cell inner membrane. It carries out the reaction a quinone + NADH + 5 H(+)(in) = a quinol + NAD(+) + 4 H(+)(out). Its function is as follows. NDH-1 shuttles electrons from NADH, via FMN and iron-sulfur (Fe-S) centers, to quinones in the respiratory chain. The immediate electron acceptor for the enzyme in this species is believed to be ubiquinone. Couples the redox reaction to proton translocation (for every two electrons transferred, four hydrogen ions are translocated across the cytoplasmic membrane), and thus conserves the redox energy in a proton gradient. In Francisella philomiragia subsp. philomiragia (strain ATCC 25017 / CCUG 19701 / FSC 153 / O#319-036), this protein is NADH-quinone oxidoreductase subunit D.